A 213-amino-acid polypeptide reads, in one-letter code: Bcl-2-related ovarian killer protein (213 aa).

Phosphoserine is present on Ser-7. Residues 15 to 45 (MDAFDRSPTDKELVAQAKALGREYVHARLLR) are interactions with ITPR1. Glycyl lysine isopeptide (Lys-Gly) (interchain with G-Cter in ubiquitin) cross-links involve residues Lys-25 and Lys-32. The short motif at 32–44 (KALGREYVHARLL) is the BH4 element. The BH3 signature appears at 67-83 (VCTVLLRLGDELEQIRP). The interval 71 to 79 (LLRLGDELE) is nuclear export signal. The BH1 motif lies at 113–132 (HIFSAGITWGKVVSLYSVAA). Residues Lys-160 and Lys-177 each participate in a glycyl lysine isopeptide (Lys-Gly) (interchain with G-Cter in ubiquitin) cross-link. A BH2 motif is present at residues 165 to 179 (WLRRRGGWTDVLKCV). The chain crosses the membrane as a helical span at residues 190–210 (WLVATLCSFGRFLKAAFFLLL).

This sequence belongs to the Bcl-2 family. As to quaternary structure, monomer; positively regulates apoptotic process. Homodimer. Heterodimer. Oligomer; promoted by apoptotic stimuli and BH3-only proteins; mediates constitutive activation. Interacts (via BH4 domain) with ITPR1; enhances BOK expression and stabilization; limits apoptosis and prevents ubiquitination and then degradation; protects ITPR1 from proteolysis by CASP3 during apoptosis. Interacts with ITPR2 and ITPR3; binds most strongly to ITPR2, and barely to ITPR3; regulates their expression. Interacts with XPO1; translocates to the cytoplasm. Interacts with BNIP3; promotes oligomerization. Ubiquitinated by AMFR/gp78 E3 ubiquitin ligase complex; mediates degradation by ubiquitin-proteasome pathway in a VCP/p97-dependent manner; prevents from proapoptotic activity; promotes degradation of newly synthesized proteins that are not ITPR1 associated. Widely expressed. Highly expressed in brain, kidney, and spleen.

It localises to the mitochondrion membrane. The protein resides in the endoplasmic reticulum membrane. The protein localises to the mitochondrion inner membrane. Its subcellular location is the cytoplasm. It is found in the nucleus. It localises to the mitochondrion. The protein resides in the endoplasmic reticulum. The protein localises to the mitochondrion outer membrane. Its subcellular location is the early endosome membrane. It is found in the recycling endosome membrane. It localises to the nucleus outer membrane. The protein resides in the golgi apparatus. The protein localises to the cis-Golgi network membrane. Its subcellular location is the trans-Golgi network membrane. It is found in the membrane. Functionally, apoptosis regulator that functions through different apoptotic signaling pathways. Plays a roles as pro-apoptotic protein that positively regulates intrinsic apoptotic process in a BAX- and BAK1-dependent manner or in a BAX- and BAK1-independent manner. In response to endoplasmic reticulum stress promotes mitochondrial apoptosis through downstream BAX/BAK1 activation and positive regulation of PERK-mediated unfolded protein response. Activates apoptosis independently of heterodimerization with survival-promoting BCL2 and BCL2L1 through induction of mitochondrial outer membrane permeabilization, in a BAX- and BAK1-independent manner, in response to inhibition of ERAD-proteasome degradation system, resulting in cytochrome c release. In response to DNA damage, mediates intrinsic apoptotic process in a TP53-dependent manner. Plays a role in granulosa cell apoptosis by CASP3 activation. Plays a roles as anti-apoptotic protein during neuronal apoptotic process, by negatively regulating poly ADP-ribose polymerase-dependent cell death through regulation of neuronal calcium homeostasis and mitochondrial bioenergetics in response to NMDA excitation. In addition to its role in apoptosis, may regulate trophoblast cell proliferation during the early stages of placental development, by acting on G1/S transition through regulation of CCNE1 expression. May also play a role as an inducer of autophagy by disrupting interaction between MCL1 and BECN1. In Mus musculus (Mouse), this protein is Bcl-2-related ovarian killer protein.